Reading from the N-terminus, the 134-residue chain is ATP synthase epsilon chain (134 aa).

This sequence belongs to the ATPase epsilon chain family. In terms of assembly, F-type ATPases have 2 components, CF(1) - the catalytic core - and CF(0) - the membrane proton channel. CF(1) has five subunits: alpha(3), beta(3), gamma(1), delta(1), epsilon(1). CF(0) has three main subunits: a, b and c.

It is found in the cellular thylakoid membrane. Produces ATP from ADP in the presence of a proton gradient across the membrane. This is ATP synthase epsilon chain from Prochlorococcus marinus (strain MIT 9515).